The chain runs to 254 residues: MATAGNPWGWFLGYLILGVAGSLVSGSCSQIINGEDCSPHSQPWQAALVMENELFCSGVLVHPQWVLSAAHCFQNSYTIGLGLHSLEADQEPGSQMVEASLSVRHPEYNRPLLANDLMLIKLDESVSESDTIRSISIASQCPTAGNSCLVSGWGLLANGRMPTVLQCVNVSVVSEEVCSKLYDPLYHPSMFCAGGGHDQKDSCNGDSGGPLICNGYLQGLVSFGKAPCGQVGVPGVYTNLCKFTEWIEKTVQAS.

The signal sequence occupies residues 1-26 (MATAGNPWGWFLGYLILGVAGSLVSG). Residues 27–30 (SCSQ) constitute a propeptide that is removed on maturation. One can recognise a Peptidase S1 domain in the interval 31–252 (IINGEDCSPH…FTEWIEKTVQ (222 aa)). Cystine bridges form between Cys37–Cys167, Cys56–Cys72, Cys141–Cys241, Cys148–Cys213, Cys178–Cys192, and Cys203–Cys228. His40 serves as a coordination point for Zn(2+). The Charge relay system role is filled by His71. Glu91 serves as a coordination point for Zn(2+). The active-site Charge relay system is the Asp116. N-linked (GlcNAc...) asparagine glycosylation occurs at Asn169. Ser207 (charge relay system) is an active-site residue.

This sequence belongs to the peptidase S1 family. Kallikrein subfamily. In terms of processing, N-glycosylated. The N-glycan structures are of complex diantennary or triantennary type, which may be further modified with up to 2 sialic acid residues. In terms of tissue distribution, expressed in prostate.

The protein localises to the secreted. Functionally, has a major role in enamel formation. Required during the maturation stage of tooth development for clearance of enamel proteins and normal structural patterning of the crystalline matrix. The protein is Kallikrein-4 (KLK4) of Homo sapiens (Human).